The chain runs to 96 residues: HssA/B-like protein 25 (96 aa).

This sequence belongs to the hssA/B family.

This Dictyostelium discoideum (Social amoeba) protein is HssA/B-like protein 25 (hssl25).